Here is a 182-residue protein sequence, read N- to C-terminus: tRNA-splicing endonuclease (182 aa).

Catalysis depends on residues Y119, H127, and K158.

This sequence belongs to the tRNA-intron endonuclease family. Archaeal short subfamily. In terms of assembly, homotetramer; although the tetramer contains four active sites, only two participate in the cleavage. Therefore, it should be considered as a dimer of dimers.

The catalysed reaction is pretRNA = a 3'-half-tRNA molecule with a 5'-OH end + a 5'-half-tRNA molecule with a 2',3'-cyclic phosphate end + an intron with a 2',3'-cyclic phosphate and a 5'-hydroxyl terminus.. Its function is as follows. Endonuclease that removes tRNA introns. Cleaves pre-tRNA at the 5'- and 3'-splice sites to release the intron. The products are an intron and two tRNA half-molecules bearing 2',3' cyclic phosphate and 5'-OH termini. Recognizes a pseudosymmetric substrate in which 2 bulged loops of 3 bases are separated by a stem of 4 bp. The polypeptide is tRNA-splicing endonuclease (Saccharolobus islandicus (strain Y.N.15.51 / Yellowstone #2) (Sulfolobus islandicus)).